Reading from the N-terminus, the 129-residue chain is Small ribosomal subunit protein uS11 (129 aa).

It belongs to the universal ribosomal protein uS11 family. In terms of assembly, part of the 30S ribosomal subunit. Interacts with proteins S7 and S18. Binds to IF-3.

Functionally, located on the platform of the 30S subunit, it bridges several disparate RNA helices of the 16S rRNA. Forms part of the Shine-Dalgarno cleft in the 70S ribosome. The chain is Small ribosomal subunit protein uS11 from Staphylococcus carnosus (strain TM300).